A 146-amino-acid polypeptide reads, in one-letter code: Transcriptional regulator MraZ (146 aa).

SpoVT-AbrB domains lie at 4–46 (TVFR…SQTE) and 75–118 (TVKV…PEQR).

The protein belongs to the MraZ family. In terms of assembly, forms oligomers.

It localises to the cytoplasm. The protein resides in the nucleoid. The polypeptide is Transcriptional regulator MraZ (Mesomycoplasma hyopneumoniae (strain 232) (Mycoplasma hyopneumoniae)).